Reading from the N-terminus, the 207-residue chain is Proteasome subunit beta 2 (207 aa).

Residues 1-10 (MLQLTEKFKG) constitute a propeptide, removed in mature form; by autocatalysis. Residue T11 is the Nucleophile of the active site.

The protein belongs to the peptidase T1B family. In terms of assembly, the 20S proteasome core is composed of 14 alpha and 14 beta subunits that assemble into four stacked heptameric rings, resulting in a barrel-shaped structure. The two inner rings, each composed of seven catalytic beta subunits, are sandwiched by two outer rings, each composed of seven alpha subunits. The catalytic chamber with the active sites is on the inside of the barrel. Has a gated structure, the ends of the cylinder being occluded by the N-termini of the alpha-subunits. Is capped at one or both ends by the proteasome regulatory ATPase, PAN.

It is found in the cytoplasm. The catalysed reaction is Cleavage of peptide bonds with very broad specificity.. The formation of the proteasomal ATPase PAN-20S proteasome complex, via the docking of the C-termini of PAN into the intersubunit pockets in the alpha-rings, triggers opening of the gate for substrate entry. Interconversion between the open-gate and close-gate conformations leads to a dynamic regulation of the 20S proteasome proteolysis activity. Component of the proteasome core, a large protease complex with broad specificity involved in protein degradation. The protein is Proteasome subunit beta 2 of Pyrococcus abyssi (strain GE5 / Orsay).